Consider the following 378-residue polypeptide: Alginate lyase (378 aa).

Positions 1–28 (MQTPKLIRPTLLSMAILSSMAWATGASA) are cleaved as a signal peptide. Substrate is bound by residues 67–68 (SK), 140–141 (HT), and tyrosine 258.

It belongs to the polysaccharide lyase 5 family.

Its subcellular location is the periplasm. The catalysed reaction is Eliminative cleavage of alginate to give oligosaccharides with 4-deoxy-alpha-L-erythro-hex-4-enuronosyl groups at their non-reducing ends and beta-D-mannuronate at their reducing end.. Its activity is regulated as follows. The monovalent cation sodium enhances activity but is not absolutely required. Its function is as follows. Catalyzes the depolymerization of alginate by cleaving the beta-1,4 glycosidic bond between two adjacent sugar residues via a beta-elimination mechanism. Degrades deacetylated polymannuronate (polyM) alginate from P.aeruginosa more efficiently than non-deacetylated polyM and alginate from M.pyrifera. AlgL from P.syringae also degrades its own alginate, which may indicate a role in cleaving preformed alginate and/or in determining the length of the alginate polymer. May serve to degrade mislocalized alginate that is trapped in the periplasmic space. This chain is Alginate lyase, found in Pseudomonas syringae pv. syringae.